A 485-amino-acid chain; its full sequence is UDP-N-acetylmuramate--L-alanine ligase (485 aa).

120–126 (GSHGKTT) provides a ligand contact to ATP.

The protein belongs to the MurCDEF family.

It is found in the cytoplasm. The catalysed reaction is UDP-N-acetyl-alpha-D-muramate + L-alanine + ATP = UDP-N-acetyl-alpha-D-muramoyl-L-alanine + ADP + phosphate + H(+). Its pathway is cell wall biogenesis; peptidoglycan biosynthesis. Cell wall formation. This is UDP-N-acetylmuramate--L-alanine ligase from Rickettsia africae (strain ESF-5).